The sequence spans 380 residues: Alpha-N-acetylneuraminate alpha-2,8-sialyltransferase ST8SIA3 (380 aa).

Residues 1–17 are Cytoplasmic-facing; the sequence is MRNCKMARVASVLGLVM. Residues 18-33 traverse the membrane as a helical; Signal-anchor for type II membrane protein segment; it reads LSVALLILSLISYVSL. The Lumenal segment spans residues 34–380; that stretch reads KKENIFTTPK…LTKLTLSHCA (347 aa). Asn-93 and Asn-113 each carry an N-linked (GlcNAc...) asparagine glycan. 2 disulfide bridges follow: Cys-162/Cys-313 and Cys-176/Cys-379. Positions 167 and 190 each coordinate CMP-N-acetyl-beta-neuraminate. An N-linked (GlcNAc...) asparagine glycan is attached at Asn-206. Residues Ser-300, Thr-301, Gly-302, Trp-322, Tyr-336, and His-337 each contribute to the CMP-N-acetyl-beta-neuraminate site. His-354 acts as the Proton donor/acceptor in catalysis.

This sequence belongs to the glycosyltransferase 29 family. As to quaternary structure, homodimer. As to expression, expressed in neurons in brain with higher expression in the striatum than in the hippocampus, cortex, and cerebellum (at protein level). Expressed in testes.

The protein resides in the golgi apparatus membrane. It carries out the reaction a ganglioside GM3 (d18:1(4E)) + CMP-N-acetyl-beta-neuraminate = a ganglioside GD3 (d18:1(4E)) + CMP + H(+). The enzyme catalyses a ganglioside GM3 + CMP-N-acetyl-beta-neuraminate = a ganglioside GD3 + CMP + H(+). It catalyses the reaction an N-acetyl-alpha-neuraminyl-(2-&gt;3)-beta-D-galactosyl derivative + CMP-N-acetyl-beta-neuraminate = an N-acetyl-alpha-neuraminyl-(2-&gt;8)-N-acetyl-alpha-neuraminyl-(2-&gt;3)-beta-D-galactosyl derivative + CMP + H(+). The catalysed reaction is an N-acetyl-alpha-neuraminyl-(2-&gt;3)-beta-D-galactosyl-(1-&gt;4)-N-acetyl-beta-D-glucosaminyl derivative + CMP-N-acetyl-beta-neuraminate = an alpha-Neu5Ac-(2-&gt;8)-alpha-Neu5Ac-(2-&gt;3)-beta-D-Gal-(1-&gt;4)-beta-D-GlcNAc derivative + CMP + H(+). It functions in the pathway protein modification; protein glycosylation. Its function is as follows. Catalyzes the transfer of sialic acid from a CMP-linked sialic acid donor onto a terminal alpha-2,3-, alpha-2,6-, or alpha-2,8-linked sialic acid of an acceptor, such as N-linked oligosaccharides of glycoproteins and glycolipids through alpha-2,8-linkages. Forms oligosialic and polysialic acid on various sialylated N-acetyllactosamine oligosaccharides of glycoproteins, including FETUB N-glycans, a2-HS-glycoprotein (AHSG) and alpha 2,3-sialylated glycosphingolipids, such as alpha 2,3-sialylparagloboside and ganglioside GM3 and to a lesser extent NCAM1 N-glycans. However, it is much more specific to N-linked oligosaccharides of glycoproteins than glycosphingolipids. 2,3-sialylparagloboside served as the best acceptor substrate among the glycolipids. alpha-Neu5Ac-(2-&gt;8)-alpha-Neu5Ac-(2-&gt;3)-beta-D-Gal-(1-&gt;4)-6S-D-GlcNAc and monosialyl and disialyl N-acetyllactosamines are the best acceptor substrates among glycoproteins. May play critical role in the striatum by mediating the formation of disialylated and trisialylated terminal glycotopes on N- and O-glycans of specific striatal proteins, regulating their distribution in lipid rafts, affecting their interaction with other binding partners, and subsequently modulating striatal functions. The polypeptide is Alpha-N-acetylneuraminate alpha-2,8-sialyltransferase ST8SIA3 (Mus musculus (Mouse)).